The chain runs to 816 residues: Neuronal PAS domain-containing protein 2 (816 aa).

Over residues 1-10 the composition is skewed to basic and acidic residues; sequence MDEDEKDRAK. The tract at residues 1–21 is disordered; it reads MDEDEKDRAKRASRNKSEKKR. A sufficient for heterodimer formation with BMAL1, E-box binding and for the effect of NADPH region spans residues 1 to 61; it reads MDEDEKDRAK…VIGFLQKHNE (61 aa). Residues 9–59 enclose the bHLH domain; it reads AKRASRNKSEKKRRDQFNVLIKELSSMLPGNTRKMDKTTVLEKVIGFLQKH. The region spanning 82–152 is the PAS 1 domain; the sequence is NEEFTQLMLE…KILSSHMLVT (71 aa). Heme b is bound by residues His-119 and His-171. The PAS 2 domain occupies 237–307; the sequence is FLKEMCVADE…RCHQHLMQFG (71 aa). The PAC domain occupies 311–354; sequence SCCYRFLTKGQQWIWLQTHYYITYHQWNSKPEFIVCTHSVVSYA. Disordered regions lie at residues 364-431, 610-639, 685-705, and 742-816; these read LALE…STPT, ISAQGPKPMRSSQLLPASGRSLSSLPSQFS, QPMMPGSCDARQPSEVSRTGR, and PSFP…LSES. A compositionally biased stretch (low complexity) spans 400–413; sequence SGLPSSPSPSASSR. Polar residues predominate over residues 420–431; it reads HTAMSEPTSTPT. Residues 623–639 are compositionally biased toward low complexity; it reads LLPASGRSLSSLPSQFS. Residues 745–759 show a composition bias toward low complexity; it reads PASRPSPLQPAQAQQ. A compositionally biased stretch (polar residues) spans 780 to 789; it reads LLSTFSQQPG. Positions 806–816 are enriched in basic residues; the sequence is PSRRVSRLSES.

Component of the circadian clock oscillator which includes the CRY proteins, CLOCK or NPAS2, BMAL1 or BMAL2, CSNK1D and/or CSNK1E, TIMELESS and the PER proteins. Efficient DNA binding requires dimerization with another bHLH protein. Interacts with NCOA3, KAT2B and CREBBP. Forms a heterodimer with BMAL1 and this heterodimerization is required for E-box-dependent transactivation. Interacts with EP300. Heme is required as a cofactor. Expressed in the retinal ganglion cells (at protein level). Expressed in the hypothalamic suprachiasmatic nuclei (SCN) of the brain. Also found in spinal cord, and to a lesser extent in colon, small intestine and uterus. Exhibits a diurnal variation in its expression in the brain.

Its subcellular location is the nucleus. Carbon monoxide (CO) and the redox state of the cell can modulate the transcriptional activity of the NPAS2-BMAL1 heterodimer. NADH and NADPH enhance the DNA-binding activity of the heterodimer whereas CO binds the heme group in NPAS2 and inhibits the DNA-binding activity of the heterodimer. In terms of biological role, transcriptional activator which forms a core component of the circadian clock. The circadian clock, an internal time-keeping system, regulates various physiological processes through the generation of approximately 24 hour circadian rhythms in gene expression, which are translated into rhythms in metabolism and behavior. It is derived from the Latin roots 'circa' (about) and 'diem' (day) and acts as an important regulator of a wide array of physiological functions including metabolism, sleep, body temperature, blood pressure, endocrine, immune, cardiovascular, and renal function. Consists of two major components: the central clock, residing in the suprachiasmatic nucleus (SCN) of the brain, and the peripheral clocks that are present in nearly every tissue and organ system. Both the central and peripheral clocks can be reset by environmental cues, also known as Zeitgebers (German for 'timegivers'). The predominant Zeitgeber for the central clock is light, which is sensed by retina and signals directly to the SCN. The central clock entrains the peripheral clocks through neuronal and hormonal signals, body temperature and feeding-related cues, aligning all clocks with the external light/dark cycle. Circadian rhythms allow an organism to achieve temporal homeostasis with its environment at the molecular level by regulating gene expression to create a peak of protein expression once every 24 hours to control when a particular physiological process is most active with respect to the solar day. Transcription and translation of core clock components (CLOCK, NPAS2, BMAL1, BMAL2, PER1, PER2, PER3, CRY1 and CRY2) plays a critical role in rhythm generation, whereas delays imposed by post-translational modifications (PTMs) are important for determining the period (tau) of the rhythms (tau refers to the period of a rhythm and is the length, in time, of one complete cycle). A diurnal rhythm is synchronized with the day/night cycle, while the ultradian and infradian rhythms have a period shorter and longer than 24 hours, respectively. Disruptions in the circadian rhythms contribute to the pathology of cardiovascular diseases, cancer, metabolic syndromes and aging. A transcription/translation feedback loop (TTFL) forms the core of the molecular circadian clock mechanism. Transcription factors, CLOCK or NPAS2 and BMAL1 or BMAL2, form the positive limb of the feedback loop, act in the form of a heterodimer and activate the transcription of core clock genes and clock-controlled genes (involved in key metabolic processes), harboring E-box elements (5'-CACGTG-3') within their promoters. The core clock genes: PER1/2/3 and CRY1/2 which are transcriptional repressors form the negative limb of the feedback loop and interact with the CLOCK|NPAS2-BMAL1|BMAL2 heterodimer inhibiting its activity and thereby negatively regulating their own expression. This heterodimer also activates nuclear receptors NR1D1/2 and RORA/B/G, which form a second feedback loop and which activate and repress BMAL1 transcription, respectively. The NPAS2-BMAL1 heterodimer positively regulates the expression of MAOA, F7 and LDHA and modulates the circadian rhythm of daytime contrast sensitivity by regulating the rhythmic expression of adenylate cyclase type 1 (ADCY1) in the retina. NPAS2 plays an important role in sleep homeostasis and in maintaining circadian behaviors in normal light/dark and feeding conditions and in the effective synchronization of feeding behavior with scheduled food availability. Regulates the gene transcription of key metabolic pathways in the liver and is involved in DNA damage response by regulating several cell cycle and DNA repair genes. Controls the circadian rhythm of NR0B2 expression by binding rhythmically to its promoter. Mediates the diurnal variation in the expression of GABARA1 receptor in the brain and contributes to the regulation of anxiety-like behaviors and GABAergic neurotransmission in the ventral striatum. This is Neuronal PAS domain-containing protein 2 (Npas2) from Mus musculus (Mouse).